Here is a 523-residue protein sequence, read N- to C-terminus: MFTKSVEVLDTTLRDGAQTANISFTLNDKIRIALLLDELGVDYIEGGWPSSNPKDEEFFKEIKKYKLTKARIAAFGSTRKKESTAKEDQSLNSIIKADVDVGVLFGKSWSLHVTDVLKISLEENLDIIYDSVNYLKSHGLRVVYDAEHFYQGYKENREYALKAVKTAEEAGADVIVLCDTNGGTLPHEVYNITKDVVNHVKVKIGLHMHNDSGGAVANTVMGVVAGARHVQGTINGIGERTGNADLIQVIPNIMLKLGLNSLKGNESLKKLKEVSRVVYEIIGVHPNPYQPYVGDFAFTHKAGVHADAVMKVTRAYEHIDPTLVGNNRRFVISEVAGSSNVIYYLEKLGIKVDKKDPRVRNAVQRIKELENRGYSFDLAPASAVLVALRDLGMYRDLIKVEYWKVMNEKELAIAIVKVNGQLEVAEGVGPVHSVDIALRKALQKVYPQINKVKLTDYRVILPGEIKNTESVVRVTIEFTDGEKNWRTEGVSTSVIEASVIALIDGLDYYLQTEKLIKSEVINN.

Residues 6-272 (VEVLDTTLRD…KGNESLKKLK (267 aa)) enclose the Pyruvate carboxyltransferase domain.

Belongs to the alpha-IPM synthase/homocitrate synthase family.

It catalyses the reaction pyruvate + acetyl-CoA + H2O = (3R)-citramalate + CoA + H(+). It functions in the pathway amino-acid biosynthesis; L-isoleucine biosynthesis; 2-oxobutanoate from pyruvate: step 1/3. With respect to regulation, inhibited by isoleucine. Catalyzes the condensation of pyruvate and acetyl-coenzyme A to form (R)-citramalate. Makes part of a pathway for isoleucine biosynthesis, i.e. the citramalate-dependent pathway. Also displays a low alpha-isopropylmalate synthase activity, using 2-oxoisovalerate as substrate, but is unable to use 2-oxoglutarate. The sequence is that of (R)-citramalate synthase from Sulfolobus acidocaldarius (strain ATCC 33909 / DSM 639 / JCM 8929 / NBRC 15157 / NCIMB 11770).